We begin with the raw amino-acid sequence, 147 residues long: Large ribosomal subunit protein bL9 (147 aa).

It belongs to the bacterial ribosomal protein bL9 family.

Functionally, binds to the 23S rRNA. In Natranaerobius thermophilus (strain ATCC BAA-1301 / DSM 18059 / JW/NM-WN-LF), this protein is Large ribosomal subunit protein bL9.